We begin with the raw amino-acid sequence, 1060 residues long: MPKRTDIRKIMVIGSGPIVIGQAAEFDYSGTQACLSLKEEGYQVVLVNSNPATIMTDKDIADKVYIEPITLEFVTRILRKERPDALLPTLGGQTGLNMAMALSKNGILEELNVELLGTKLSAIDKAEDRDLFKQLMEELNQPIPESEIVNSVEEAIQFAEQIGYPLIVRPAFTLGGTGGGMCDNQEQLVDITTKGLKLSPVTQCLIERSIAGFKEIEYEVMRDAADNALVVCNMENFDPVGIHTGDSIVFAPAQTLSDVENQLLRDASLDIIRALKIEGGCNVQLALDPNSFKYYVIEVNPRVSRSSALASKATGYPIAKLAAKIAVGLTLDEVINPITKTTYAMFEPALDYVVAKMPRFPFDKFESGDRKLGTQMKATGEVMAIGRNIEESLLKACRSLEIGVDHIKIADLDNVSDDVLLEKIRKAEDDRLFYLAEALRRHYSIEKLASLTSIDSFFLDKLRVIVELEDLLSKNRLDINILKKVKNKGFSDKAIASLWQINEDQVRNMRKEAGILPVYKMVDTCASEFDSATPYFYSTYAVENESLISDKASILVLGSGPIRIGQGVEFDYATVHSVKAIRESGFEAIIMNSNPETVSTDFSISDKLYFEPLTFEDVMNVIDLEKPEGVILQFGGQTAINLAKDLNKAGVKILGTQLEDLDRAENRKQFEATLQALNIPQPPGFTATTEEEAVNAAQKIGYPVLVRPSYVLGGRAMKIVENEEDLRHYMTTAVKASPDHPVLIDAYLIGKECEVDAISDGQNILIPGIMEHIERSGVHSGDSMAVYPPQTLSETIIETIVDYTKRLAIGLNCIGMMNIQFVIKDQKVYVIEVNPRASRTLPFLSKVTHIPMAQVATKVILGDKLCNFTYGYDLYPASDMVHIKAPVFSFTKLAKVDSLLGPEMKSTGEVMGSDINLQKALYKAFEAAYLHMPDYGNIVFTVDDTDKEEALELAKVYQSIGYRIYATQGTAIYFDANGLETVLVGKLGENDRNHIPDLIKNGKIQAVINTVGQNNIDNHDALIIRRSAIEQGVPLFTSLDTAHAMFKVLESRAFTLKVLD.

The segment at 1–401 is carboxyphosphate synthetic domain; it reads MPKRTDIRKI…SLLKACRSLE (401 aa). ATP is bound by residues Arg129, Arg169, Gly175, Gly176, Arg208, Ile210, Glu215, Gly241, Ile242, His243, Gln284, and Glu298. The region spanning 133-327 is the ATP-grasp 1 domain; the sequence is KQLMEELNQP…IAKLAAKIAV (195 aa). Gln284, Glu298, and Asn300 together coordinate Mg(2+). Mn(2+) is bound by residues Gln284, Glu298, and Asn300. Positions 402-546 are oligomerization domain; that stretch reads IGVDHIKIAD…YSTYAVENES (145 aa). The tract at residues 547 to 929 is carbamoyl phosphate synthetic domain; the sequence is LISDKASILV…ALYKAFEAAY (383 aa). The ATP-grasp 2 domain occupies 671–861; sequence EATLQALNIP…MAQVATKVIL (191 aa). Residues Arg707, Ala746, Leu748, Glu752, Gly777, Val778, His779, Ser780, Gln820, and Glu832 each contribute to the ATP site. The Mg(2+) site is built by Gln820, Glu832, and Asn834. Mn(2+) is bound by residues Gln820, Glu832, and Asn834. The MGS-like domain maps to 930–1060; the sequence is LHMPDYGNIV…SRAFTLKVLD (131 aa). Residues 930–1060 are allosteric domain; sequence LHMPDYGNIV…SRAFTLKVLD (131 aa).

It belongs to the CarB family. In terms of assembly, composed of two chains; the small (or glutamine) chain promotes the hydrolysis of glutamine to ammonia, which is used by the large (or ammonia) chain to synthesize carbamoyl phosphate. Tetramer of heterodimers (alpha,beta)4. It depends on Mg(2+) as a cofactor. Mn(2+) serves as cofactor.

The enzyme catalyses hydrogencarbonate + L-glutamine + 2 ATP + H2O = carbamoyl phosphate + L-glutamate + 2 ADP + phosphate + 2 H(+). It carries out the reaction hydrogencarbonate + NH4(+) + 2 ATP = carbamoyl phosphate + 2 ADP + phosphate + 2 H(+). Its pathway is amino-acid biosynthesis; L-arginine biosynthesis; carbamoyl phosphate from bicarbonate: step 1/1. It functions in the pathway pyrimidine metabolism; UMP biosynthesis via de novo pathway; (S)-dihydroorotate from bicarbonate: step 1/3. Large subunit of the glutamine-dependent carbamoyl phosphate synthetase (CPSase). CPSase catalyzes the formation of carbamoyl phosphate from the ammonia moiety of glutamine, carbonate, and phosphate donated by ATP, constituting the first step of 2 biosynthetic pathways, one leading to arginine and/or urea and the other to pyrimidine nucleotides. The large subunit (synthetase) binds the substrates ammonia (free or transferred from glutamine from the small subunit), hydrogencarbonate and ATP and carries out an ATP-coupled ligase reaction, activating hydrogencarbonate by forming carboxy phosphate which reacts with ammonia to form carbamoyl phosphate. This is Carbamoyl phosphate synthase large chain from Streptococcus agalactiae serotype V (strain ATCC BAA-611 / 2603 V/R).